Here is a 449-residue protein sequence, read N- to C-terminus: Zinc finger and BTB domain-containing protein 14 (449 aa).

A BTB domain is found at 36–102; the sequence is CDIAIVVEDV…MYTAKISVKK (67 aa). Lys46 participates in a covalent cross-link: Glycyl lysine isopeptide (Lys-Gly) (interchain with G-Cter in SUMO2). The Nuclear localization signal motif lies at 50 to 66; that stretch reads HRCVLAACSTYFKKLFK. Residues 156–194 are disordered; it reads ADAQDDDVEEIGDQDDSPSDDTVEGTPPSQEDGKSPTTT. A compositionally biased stretch (acidic residues) spans 157-178; the sequence is DAQDDDVEEIGDQDDSPSDDTV. Glycyl lysine isopeptide (Lys-Gly) (interchain with G-Cter in SUMO2) cross-links involve residues Lys203 and Lys249. C2H2-type zinc fingers lie at residues 277-304, 305-332, 333-360, 361-388, and 389-417; these read IACQACGKTFSDEGRLRKHEKLHTADRP, FVCEMCTKGFTTQAHLKEHLKIHTGYKP, YSCEVCGKSFIRAPDLKKHERVHSNERP, FACHMCDKAFKHKSHLKDHERRHRGEKP, and FVCGSCTKAFAKASDLKRHENNMHSERKQ. Positions 405–417 are enriched in basic and acidic residues; that stretch reads KRHENNMHSERKQ. The segment at 405-424 is disordered; the sequence is KRHENNMHSERKQVTPSAIQ.

It belongs to the krueppel C2H2-type zinc-finger protein family. As to quaternary structure, interacts with ZBTB21. Ubiquitous.

The protein localises to the nucleus. Transcriptional activator of the dopamine transporter (DAT), binding it's promoter at the consensus sequence 5'-CCTGCACAGTTCACGGA-3'. Binds to 5'-d(GCC)(n)-3' trinucleotide repeats in promoter regions and acts as a repressor of the FMR1 gene. Transcriptional repressor of MYC and thymidine kinase promoters. This is Zinc finger and BTB domain-containing protein 14 (Zbtb14) from Mus musculus (Mouse).